The following is a 137-amino-acid chain: Large ribosomal subunit protein uL16c (137 aa).

Residues 1–17 show a composition bias toward basic residues; sequence MLSPKKTRFRRQHRGRM. The segment at 1–21 is disordered; sequence MLSPKKTRFRRQHRGRMKGLS.

The protein belongs to the universal ribosomal protein uL16 family. As to quaternary structure, part of the 50S ribosomal subunit.

Its subcellular location is the plastid. This Cuscuta obtusiflora (Peruvian dodder) protein is Large ribosomal subunit protein uL16c.